The chain runs to 405 residues: Tryptophan synthase beta chain (405 aa).

K95 carries the post-translational modification N6-(pyridoxal phosphate)lysine.

This sequence belongs to the TrpB family. Tetramer of two alpha and two beta chains. Pyridoxal 5'-phosphate is required as a cofactor.

It catalyses the reaction (1S,2R)-1-C-(indol-3-yl)glycerol 3-phosphate + L-serine = D-glyceraldehyde 3-phosphate + L-tryptophan + H2O. Its pathway is amino-acid biosynthesis; L-tryptophan biosynthesis; L-tryptophan from chorismate: step 5/5. Functionally, the beta subunit is responsible for the synthesis of L-tryptophan from indole and L-serine. The sequence is that of Tryptophan synthase beta chain from Pseudomonas putida (strain ATCC 700007 / DSM 6899 / JCM 31910 / BCRC 17059 / LMG 24140 / F1).